Consider the following 344-residue polypeptide: Dihydroorotate dehydrogenase (quinone) (344 aa).

FMN contacts are provided by residues 65-69 and T89; that span reads AGFDK. Residue K69 coordinates substrate. 114–118 is a substrate binding site; the sequence is NRMGF. 2 residues coordinate FMN: N145 and N178. Residue N178 coordinates substrate. S181 acts as the Nucleophile in catalysis. N183 provides a ligand contact to substrate. Residues K215 and T243 each coordinate FMN. 244–245 provides a ligand contact to substrate; sequence NT. FMN contacts are provided by residues G269, G298, and 319 to 320; that span reads YT.

The protein belongs to the dihydroorotate dehydrogenase family. Type 2 subfamily. As to quaternary structure, monomer. FMN is required as a cofactor.

It is found in the cell membrane. The catalysed reaction is (S)-dihydroorotate + a quinone = orotate + a quinol. It participates in pyrimidine metabolism; UMP biosynthesis via de novo pathway; orotate from (S)-dihydroorotate (quinone route): step 1/1. Catalyzes the conversion of dihydroorotate to orotate with quinone as electron acceptor. In Clavibacter sepedonicus (Clavibacter michiganensis subsp. sepedonicus), this protein is Dihydroorotate dehydrogenase (quinone).